A 481-amino-acid chain; its full sequence is Glutamate--tRNA ligase (481 aa).

Positions 9 to 19 (PSPTGNLHIGT) match the 'HIGH' region motif. The 'KMSKS' region signature appears at 247–251 (KLSKR). Lysine 250 contributes to the ATP binding site.

This sequence belongs to the class-I aminoacyl-tRNA synthetase family. Glutamate--tRNA ligase type 1 subfamily. Monomer.

The protein resides in the cytoplasm. The catalysed reaction is tRNA(Glu) + L-glutamate + ATP = L-glutamyl-tRNA(Glu) + AMP + diphosphate. In terms of biological role, catalyzes the attachment of glutamate to tRNA(Glu) in a two-step reaction: glutamate is first activated by ATP to form Glu-AMP and then transferred to the acceptor end of tRNA(Glu). This chain is Glutamate--tRNA ligase, found in Trichormus variabilis (strain ATCC 29413 / PCC 7937) (Anabaena variabilis).